The following is a 1708-amino-acid chain: Clathrin heavy chain 2 (1708 aa).

The interval 1–492 (MAAANAPIAM…VDNDLALKIY (492 aa)) is globular terminal domain. WD40-like repeat stretches follow at residues 25-67 (FVTF…RPIT), 68-113 (ADSA…MPEQ), 114-155 (VVFW…ANLA), 156-205 (NNQI…QALE), 206-270 (AHAA…PDFQ), 271-314 (DDFP…ISPD), and 315-343 (PIFLTAESSASGGFYAINRRGQVLHATVN). The tract at residues 462 to 478 (ENWLAEDKLECSEELGD) is binding site for the uncoating ATPase, involved in lattice disassembly. A flexible linker region spans residues 493 to 536 (IKARATPKVVAAFAERREFDKILIYSKQVGYTPDYLFLLQTILR). The distal segment stretch occupies residues 537–648 (TDPQGAVNFA…RALQHYTELP (112 aa)). The heavy chain arm stretch occupies residues 537–1708 (TDPQGAVNFA…AYGMPPMGSY (1172 aa)). CHCR repeat units follow at residues 551–697 (QMEG…QIVV), 700–842 (AKEY…PEDF), 847–986 (ILSV…QLID), 993–1138 (LPES…VSEA), 1142–1283 (FIRA…FRLA), 1288–1434 (LNII…DLIN), and 1437–1580 (LNVL…KECF). Positions 653 to 1708 (VMVNTHAIEP…AYGMPPMGSY (1056 aa)) are proximal segment. The involved in binding clathrin light chain stretch occupies residues 1227–1536 (AAKIIYAFIS…YIYKKAGRWK (310 aa)). Positions 1564 to 1708 (SEDLLVYFIE…AYGMPPMGSY (145 aa)) are trimerization.

The protein belongs to the clathrin heavy chain family. Clathrin triskelions, composed of 3 heavy chains and 3 light chains, are the basic subunits of the clathrin coat.

It is found in the cytoplasmic vesicle membrane. It localises to the membrane. The protein localises to the coated pit. Functionally, clathrin is the major protein of the polyhedral coat of coated pits and vesicles. The sequence is that of Clathrin heavy chain 2 from Oryza sativa subsp. japonica (Rice).